Consider the following 143-residue polypeptide: 3-dehydroquinate dehydratase (143 aa).

Y23 functions as the Proton acceptor in the catalytic mechanism. Substrate contacts are provided by N74, H80, and D87. Catalysis depends on H100, which acts as the Proton donor. Substrate contacts are provided by residues I101–S102 and R111.

Belongs to the type-II 3-dehydroquinase family. In terms of assembly, homododecamer.

The enzyme catalyses 3-dehydroquinate = 3-dehydroshikimate + H2O. The protein operates within metabolic intermediate biosynthesis; chorismate biosynthesis; chorismate from D-erythrose 4-phosphate and phosphoenolpyruvate: step 3/7. Its function is as follows. Catalyzes a trans-dehydration via an enolate intermediate. The polypeptide is 3-dehydroquinate dehydratase (Endomicrobium trichonymphae).